The following is an 87-amino-acid chain: Large ribosomal subunit protein eL20 (87 aa).

The protein belongs to the eukaryotic ribosomal protein eL20 family. In terms of assembly, part of the 50S ribosomal subunit. Binds 23S rRNA.

This chain is Large ribosomal subunit protein eL20, found in Staphylothermus marinus (strain ATCC 43588 / DSM 3639 / JCM 9404 / F1).